A 187-amino-acid polypeptide reads, in one-letter code: ATP synthase subunit b (187 aa).

The helical transmembrane segment at 32 to 52 (NILDTNLINLAIIITVLFVFG) threads the bilayer.

Belongs to the ATPase B chain family. In terms of assembly, F-type ATPases have 2 components, F(1) - the catalytic core - and F(0) - the membrane proton channel. F(1) has five subunits: alpha(3), beta(3), gamma(1), delta(1), epsilon(1). F(0) has four main subunits: a(1), b(1), b'(1) and c(10-14). The alpha and beta chains form an alternating ring which encloses part of the gamma chain. F(1) is attached to F(0) by a central stalk formed by the gamma and epsilon chains, while a peripheral stalk is formed by the delta, b and b' chains.

The protein resides in the cellular thylakoid membrane. Functionally, f(1)F(0) ATP synthase produces ATP from ADP in the presence of a proton or sodium gradient. F-type ATPases consist of two structural domains, F(1) containing the extramembraneous catalytic core and F(0) containing the membrane proton channel, linked together by a central stalk and a peripheral stalk. During catalysis, ATP synthesis in the catalytic domain of F(1) is coupled via a rotary mechanism of the central stalk subunits to proton translocation. Its function is as follows. Component of the F(0) channel, it forms part of the peripheral stalk, linking F(1) to F(0). The sequence is that of ATP synthase subunit b from Trichormus variabilis (strain ATCC 29413 / PCC 7937) (Anabaena variabilis).